Reading from the N-terminus, the 304-residue chain is Acetyl-coenzyme A carboxylase carboxyl transferase subunit beta (304 aa).

The CoA carboxyltransferase N-terminal domain occupies 29-298; sequence LWSKCESCGA…ASDVSPAAVP (270 aa). Zn(2+) contacts are provided by cysteine 33, cysteine 36, cysteine 52, and cysteine 55. The segment at 33 to 55 adopts a C4-type zinc-finger fold; the sequence is CESCGALTYTKDLRANQMVCLEC.

The protein belongs to the AccD/PCCB family. Acetyl-CoA carboxylase is a heterohexamer composed of biotin carboxyl carrier protein (AccB), biotin carboxylase (AccC) and two subunits each of ACCase subunit alpha (AccA) and ACCase subunit beta (AccD). Zn(2+) is required as a cofactor.

The protein resides in the cytoplasm. It catalyses the reaction N(6)-carboxybiotinyl-L-lysyl-[protein] + acetyl-CoA = N(6)-biotinyl-L-lysyl-[protein] + malonyl-CoA. It participates in lipid metabolism; malonyl-CoA biosynthesis; malonyl-CoA from acetyl-CoA: step 1/1. In terms of biological role, component of the acetyl coenzyme A carboxylase (ACC) complex. Biotin carboxylase (BC) catalyzes the carboxylation of biotin on its carrier protein (BCCP) and then the CO(2) group is transferred by the transcarboxylase to acetyl-CoA to form malonyl-CoA. This chain is Acetyl-coenzyme A carboxylase carboxyl transferase subunit beta, found in Acaryochloris marina (strain MBIC 11017).